The primary structure comprises 495 residues: uncharacterized protein (495 aa).

A run of 12 helical transmembrane segments spans residues 43–63 (IIISFMTMLCMYGSSVFMPSI), 75–95 (TLVVLGATLYVIGVMLGPLIF), 106–126 (PLNIFGYTLFALMQIPTALSV), 128–148 (LAMFVVFRFFSGFFGSVGLGI), 168–188 (IYFLGICLGPAIAPIASGFIA), 196–216 (WEFWILLMLSGVSLLAGVVFL), 284–304 (PIMILISLIVGTVYGILYLLF), 323–343 (GLTYISLSIGQVFAVFVLLPL), 366–386 (PMAFLGCFAIMTGMFIFGWTV), 390–410 (VFWFVPLIGTTLVGAGFVMTF), 426–446 (ASAMAAIAIPRNIFGACFPLF), and 461–481 (SLLAFLLVAINFSIAALYMFG).

Belongs to the major facilitator superfamily. CAR1 family.

The protein resides in the membrane. This is an uncharacterized protein from Schizosaccharomyces pombe (strain 972 / ATCC 24843) (Fission yeast).